Consider the following 572-residue polypeptide: Receptor-transporting protein 5 (572 aa).

The segment at Ser52 to Glu148 adopts a 3CxxC-type zinc-finger fold. Residues Phe544–Met560 form a helical membrane-spanning segment.

It localises to the membrane. In Homo sapiens (Human), this protein is Receptor-transporting protein 5 (RTP5).